The following is a 430-amino-acid chain: Glutamate-1-semialdehyde 2,1-aminomutase (430 aa).

Lys-265 bears the N6-(pyridoxal phosphate)lysine mark.

It belongs to the class-III pyridoxal-phosphate-dependent aminotransferase family. HemL subfamily. In terms of assembly, homodimer. It depends on pyridoxal 5'-phosphate as a cofactor.

It localises to the cytoplasm. It carries out the reaction (S)-4-amino-5-oxopentanoate = 5-aminolevulinate. It functions in the pathway porphyrin-containing compound metabolism; protoporphyrin-IX biosynthesis; 5-aminolevulinate from L-glutamyl-tRNA(Glu): step 2/2. The polypeptide is Glutamate-1-semialdehyde 2,1-aminomutase (Shewanella sp. (strain MR-4)).